The chain runs to 269 residues: Shikimate dehydrogenase (NADP(+)) (269 aa).

Shikimate-binding positions include 14-16 and threonine 61; that span reads SKS. Lysine 65 (proton acceptor) is an active-site residue. NADP(+) is bound at residue glutamate 77. Residues asparagine 86 and aspartate 102 each contribute to the shikimate site. Residues 126 to 130, 149 to 154, and methionine 213 contribute to the NADP(+) site; these read GAGGA and NRTLTK. Residue tyrosine 215 participates in shikimate binding. NADP(+) is bound at residue glycine 238.

It belongs to the shikimate dehydrogenase family. Homodimer.

The catalysed reaction is shikimate + NADP(+) = 3-dehydroshikimate + NADPH + H(+). It functions in the pathway metabolic intermediate biosynthesis; chorismate biosynthesis; chorismate from D-erythrose 4-phosphate and phosphoenolpyruvate: step 4/7. Its function is as follows. Involved in the biosynthesis of the chorismate, which leads to the biosynthesis of aromatic amino acids. Catalyzes the reversible NADPH linked reduction of 3-dehydroshikimate (DHSA) to yield shikimate (SA). This is Shikimate dehydrogenase (NADP(+)) from Actinobacillus succinogenes (strain ATCC 55618 / DSM 22257 / CCUG 43843 / 130Z).